We begin with the raw amino-acid sequence, 225 residues long: PKHD-type hydroxylase YbiX (225 aa).

Positions 78–177 (TLSTPLFNRY…RVASFMWIQS (100 aa)) constitute a Fe2OG dioxygenase domain. Residues histidine 96, aspartate 98, and histidine 158 each contribute to the Fe cation site. Arginine 168 is a binding site for 2-oxoglutarate.

Requires Fe(2+) as cofactor. L-ascorbate is required as a cofactor.

The chain is PKHD-type hydroxylase YbiX from Escherichia coli O7:K1 (strain IAI39 / ExPEC).